We begin with the raw amino-acid sequence, 351 residues long: Dihydroorotate dehydrogenase (quinone) (351 aa).

Residues 61-65 and Thr-85 contribute to the FMN site; that span reads AGLDK. Residue Lys-65 coordinates substrate. 110–114 is a binding site for substrate; that stretch reads NRMGF. The FMN site is built by Asn-139 and Asn-172. Asn-172 is a substrate binding site. The Nucleophile role is filled by Ser-175. Asn-177 provides a ligand contact to substrate. The FMN site is built by Lys-217 and Thr-245. Substrate is bound at residue 246–247; sequence NT. Residues Gly-268, Gly-297, and 318-319 contribute to the FMN site; that span reads YS.

This sequence belongs to the dihydroorotate dehydrogenase family. Type 2 subfamily. As to quaternary structure, monomer. Requires FMN as cofactor.

The protein localises to the cell membrane. The enzyme catalyses (S)-dihydroorotate + a quinone = orotate + a quinol. The protein operates within pyrimidine metabolism; UMP biosynthesis via de novo pathway; orotate from (S)-dihydroorotate (quinone route): step 1/1. Catalyzes the conversion of dihydroorotate to orotate with quinone as electron acceptor. The protein is Dihydroorotate dehydrogenase (quinone) of Xanthomonas axonopodis pv. citri (strain 306).